The sequence spans 328 residues: Ribosomal RNA large subunit methyltransferase F (328 aa).

Residues 1–31 (MTDTRKPPRKKPQRPAKPAAPREKATLHPRN) are disordered.

Belongs to the methyltransferase superfamily. METTL16/RlmF family.

Its subcellular location is the cytoplasm. The enzyme catalyses adenosine(1618) in 23S rRNA + S-adenosyl-L-methionine = N(6)-methyladenosine(1618) in 23S rRNA + S-adenosyl-L-homocysteine + H(+). Specifically methylates the adenine in position 1618 of 23S rRNA. This Pseudomonas syringae pv. syringae (strain B728a) protein is Ribosomal RNA large subunit methyltransferase F.